Reading from the N-terminus, the 388-residue chain is Chorismate synthase (388 aa).

NADP(+) contacts are provided by Arg-39 and Arg-45. Residues 130–132 (RSS), 251–252 (NA), Gly-296, 311–315 (KPIPT), and Arg-337 each bind FMN.

It belongs to the chorismate synthase family. As to quaternary structure, homotetramer. It depends on FMNH2 as a cofactor.

It carries out the reaction 5-O-(1-carboxyvinyl)-3-phosphoshikimate = chorismate + phosphate. Its pathway is metabolic intermediate biosynthesis; chorismate biosynthesis; chorismate from D-erythrose 4-phosphate and phosphoenolpyruvate: step 7/7. In terms of biological role, catalyzes the anti-1,4-elimination of the C-3 phosphate and the C-6 proR hydrogen from 5-enolpyruvylshikimate-3-phosphate (EPSP) to yield chorismate, which is the branch point compound that serves as the starting substrate for the three terminal pathways of aromatic amino acid biosynthesis. This reaction introduces a second double bond into the aromatic ring system. This Streptococcus pyogenes serotype M12 (strain MGAS2096) protein is Chorismate synthase.